A 135-amino-acid chain; its full sequence is C-type lectin Cal (135 aa).

4 cysteine pairs are disulfide-bonded: Cys-3–Cys-14, Cys-31–Cys-131, Cys-38–Cys-133, and Cys-106–Cys-123. A C-type lectin domain is found at Met-10–Gln-132. Positions 96, 98, 104, 119, and 120 each coordinate Ca(2+). The short motif at Gln-96–Asp-98 is the Galactose-binding element.

The protein belongs to the true venom lectin family. Homodecamer of disulfide-linked dimers arranged in two pseudo-5-fold symmetric pentamers. As to expression, expressed by the venom gland.

It is found in the secreted. In terms of biological role, galactose-binding protein which recognizes specific carbohydrate structures and agglutinates a variety of animal cells by binding to cell-surface glycoproteins and glycolipids. Calcium-dependent lectin. Shows high hemagglutinating activity (MHC=10 ng/ml). This is C-type lectin Cal from Crotalus atrox (Western diamondback rattlesnake).